The following is a 260-amino-acid chain: Phosphate import ATP-binding protein PstB (260 aa).

Positions 13-255 constitute an ABC transporter domain; that stretch reads MRAQGVNVFY…PKQERTKDYI (243 aa). 45-52 is an ATP binding site; sequence GPSGCGKS.

It belongs to the ABC transporter superfamily. Phosphate importer (TC 3.A.1.7) family. The complex is composed of two ATP-binding proteins (PstB), two transmembrane proteins (PstC and PstA) and a solute-binding protein (PstS).

Its subcellular location is the cell inner membrane. It carries out the reaction phosphate(out) + ATP + H2O = ADP + 2 phosphate(in) + H(+). Its function is as follows. Part of the ABC transporter complex PstSACB involved in phosphate import. Responsible for energy coupling to the transport system. The chain is Phosphate import ATP-binding protein PstB from Sphingopyxis alaskensis (strain DSM 13593 / LMG 18877 / RB2256) (Sphingomonas alaskensis).